Here is a 458-residue protein sequence, read N- to C-terminus: Divalent metal cation transporter MntH (458 aa).

11 helical membrane-spanning segments follow: residues 38-58, 86-106, 119-139, 151-171, 180-200, 223-243, 275-295, 315-335, 370-390, 395-415, and 436-456; these read GFWK…VGYM, LIAM…GMDL, GIFL…AEII, IPLL…LLLM, AIVA…VILA, MLFL…LYLH, LTIA…MFYG, IVGS…LLAS, GLSI…EAQV, IYSQ…LTLF, and WFVT…TVGL.

The protein belongs to the NRAMP family.

Its subcellular location is the cell membrane. In terms of biological role, h(+)-stimulated, divalent metal cation uptake system. This chain is Divalent metal cation transporter MntH, found in Latilactobacillus sakei subsp. sakei (strain 23K) (Lactobacillus sakei subsp. sakei).